The chain runs to 152 residues: Superoxide dismutase [Cu-Zn] (152 aa).

Cu cation-binding residues include H44, H46, and H61. Zn(2+) is bound by residues H61, H69, H78, and D81. H118 is a binding site for Cu cation.

Belongs to the Cu-Zn superoxide dismutase family. Homodimer. The cofactor is Cu cation. It depends on Zn(2+) as a cofactor.

The protein resides in the cytoplasm. The enzyme catalyses 2 superoxide + 2 H(+) = H2O2 + O2. In terms of biological role, destroys radicals which are normally produced within the cells and which are toxic to biological systems. The polypeptide is Superoxide dismutase [Cu-Zn] (Drosophila pseudoobscura pseudoobscura (Fruit fly)).